We begin with the raw amino-acid sequence, 113 residues long: DNA-directed RNA polymerase subunit Rpo4 (113 aa).

This sequence belongs to the eukaryotic RPB4 RNA polymerase subunit family. In terms of assembly, part of the 13-subunit RNA polymerase complex. Forms a stalk with Rpo7 that extends from the main structure.

The protein localises to the cytoplasm. It catalyses the reaction RNA(n) + a ribonucleoside 5'-triphosphate = RNA(n+1) + diphosphate. DNA-dependent RNA polymerase (RNAP) catalyzes the transcription of DNA into RNA using the four ribonucleoside triphosphates as substrates. This subunit is less well bound than the others. This is DNA-directed RNA polymerase subunit Rpo4 from Saccharolobus solfataricus (strain ATCC 35092 / DSM 1617 / JCM 11322 / P2) (Sulfolobus solfataricus).